A 518-amino-acid chain; its full sequence is Membrane-bound lytic murein transglycosylase F (518 aa).

The first 21 residues, 1-21 (MKKLKINYLFIGILALLLAVA), serve as a signal peptide directing secretion. Residues 22-269 (LWPSIPWFGK…RIEEKYLGHG (248 aa)) are non-LT domain. The segment at 270–518 (DDFDYVDTRT…SRKGSEEKQN (249 aa)) is LT domain. Glu314 is a catalytic residue.

The protein in the N-terminal section; belongs to the bacterial solute-binding protein 3 family. This sequence in the C-terminal section; belongs to the transglycosylase Slt family.

It is found in the cell outer membrane. It catalyses the reaction Exolytic cleavage of the (1-&gt;4)-beta-glycosidic linkage between N-acetylmuramic acid (MurNAc) and N-acetylglucosamine (GlcNAc) residues in peptidoglycan, from either the reducing or the non-reducing ends of the peptidoglycan chains, with concomitant formation of a 1,6-anhydrobond in the MurNAc residue.. Functionally, murein-degrading enzyme that degrades murein glycan strands and insoluble, high-molecular weight murein sacculi, with the concomitant formation of a 1,6-anhydromuramoyl product. Lytic transglycosylases (LTs) play an integral role in the metabolism of the peptidoglycan (PG) sacculus. Their lytic action creates space within the PG sacculus to allow for its expansion as well as for the insertion of various structures such as secretion systems and flagella. This chain is Membrane-bound lytic murein transglycosylase F, found in Shigella sonnei (strain Ss046).